A 569-amino-acid chain; its full sequence is Cationic amino acid transporter 5 (569 aa).

Over 1 to 67 (MEGEERGYWR…KQSEHEMKRC (67 aa)) the chain is Cytoplasmic. Residues 68–88 (LTWWDLVWFGFGSVIGAGIFV) form a helical membrane-spanning segment. The Extracellular segment spans residues 89-97 (LTGQEAHEQ). Residues 98–118 (AGPAIVLSYVVSGLSAMLSVF) traverse the membrane as a helical segment. Residues 119–143 (CYTEFAVEIPVAGGSFAYLRIELGD) lie on the Cytoplasmic side of the membrane. A helical membrane pass occupies residues 144-164 (FAAFITAGNILLESIVGTAAV). Residues 165-192 (ARAWTSYFATLLNRSPNALRIKTDLSSG) lie on the Extracellular side of the membrane. A helical membrane pass occupies residues 193–213 (FNLLDPIAVVVIAASATIASI). Topologically, residues 214-222 (STRKTSLLN) are cytoplasmic. A helical transmembrane segment spans residues 223–243 (WIASAINTLVIFFVIIAGFIH). Topologically, residues 244–251 (ADTSNLTP) are extracellular. Residues 252-272 (FLPFGPEGVFRAAAVVYFAYG) traverse the membrane as a helical segment. Topologically, residues 273–290 (GFDSIATMAEETKNPSRD) are cytoplasmic. Residues 291-311 (IPIGLLGSMSIITVIYCLMAL) traverse the membrane as a helical segment. Topologically, residues 312–341 (SLSMMQKYTDIDPNAAYSVAFQSVGMKWGK) are extracellular. Residues 342-362 (YLVALGALKGMTTVLLVGALG) form a helical membrane-spanning segment. The Cytoplasmic segment spans residues 363 to 389 (QARYVTHIARTHMIPPIFALVHPKTGT). Residues 390 to 410 (PINANLLVAIPSALIAFFSGL) traverse the membrane as a helical segment. Position 411 (Asp-411) is a topological domain, extracellular. A helical transmembrane segment spans residues 412-432 (VLASLLSISTLFIFTMMPIAL). Residues 433–450 (LVRRYYVRQDTPRVHLIK) are Cytoplasmic-facing. A helical transmembrane segment spans residues 451-471 (LITCLLFVVVSSMGTSAYWGM). Residues 472 to 477 (QRKGSW) are Extracellular-facing. Residues 478 to 498 (IGYTVTVPFWFLGTLGIVFFV) traverse the membrane as a helical segment. Topologically, residues 499–505 (PQQRTPK) are cytoplasmic. A helical membrane pass occupies residues 506-526 (VWGVPLVPWLPCLSIATNIFL). Topologically, residues 527 to 537 (MGSLGAMAFVR) are extracellular. Residues 538 to 558 (FGVCTLAMLLYYFLLGLHATF) traverse the membrane as a helical segment. Residues 559 to 569 (DMAHQQIVPRT) lie on the Cytoplasmic side of the membrane.

The protein belongs to the amino acid-polyamine-organocation (APC) superfamily. Cationic amino acid transporter (CAT) (TC 2.A.3.3) family. Expressed in roots, stems, flowers, seeds, and leaves. Mostly present in leaf rims and cotyledons of developing seedlings.

Its subcellular location is the cell membrane. In terms of biological role, high-affinity permease involved in the transport of the cationic amino acids (e.g. arginine, and, to a lower extent, citrulline and glutamate). Transport mostly basic amino acids, and, to a lower extent neutral and acidic amino acids. The sequence is that of Cationic amino acid transporter 5 (CAT5) from Arabidopsis thaliana (Mouse-ear cress).